A 293-amino-acid chain; its full sequence is Nucleotide-binding protein BCG9842_B5683 (293 aa).

Position 14–21 (Gly14–Thr21) interacts with ATP. A GTP-binding site is contributed by Asp65 to Gly68.

Belongs to the RapZ-like family.

In terms of biological role, displays ATPase and GTPase activities. This chain is Nucleotide-binding protein BCG9842_B5683, found in Bacillus cereus (strain G9842).